A 310-amino-acid chain; its full sequence is Ribosomal protein uL3 glutamine methyltransferase (310 aa).

It belongs to the protein N5-glutamine methyltransferase family. PrmB subfamily.

The enzyme catalyses L-glutaminyl-[ribosomal protein uL3] + S-adenosyl-L-methionine = N(5)-methyl-L-glutaminyl-[ribosomal protein uL3] + S-adenosyl-L-homocysteine + H(+). Functionally, methylates large ribosomal subunit protein uL3 on a specific glutamine residue. The sequence is that of Ribosomal protein uL3 glutamine methyltransferase from Aliivibrio fischeri (strain ATCC 700601 / ES114) (Vibrio fischeri).